Consider the following 323-residue polypeptide: Transcription factor MafB (323 aa).

Residue K32 forms a Glycyl lysine isopeptide (Lys-Gly) (interchain with G-Cter in SUMO) linkage. Positions 34–43 are enriched in basic and acidic residues; the sequence is EPLGRAERPG. 2 disordered regions span residues 34-78 and 116-210; these read EPLG…PTEQ and PVPQ…VEDR. Low complexity predominate over residues 54 to 76; the sequence is SLSSTPLSTPCSSVPSSPSFSPT. 2 stretches are compositionally biased toward basic residues: residues 129 to 143 and 159 to 168; these read GAHH…HPHH and AHPHHHHHHQ. Residues 192–201 show a composition bias toward low complexity; the sequence is PHATASATAA. Positions 238–263 are basic motif; sequence RLKQKRRTLKNRGYAQSCRYKRVQQK. Residues 238–301 form the bZIP domain; that stretch reads RLKQKRRTLK…DAHKVKCEKL (64 aa). The leucine-zipper stretch occupies residues 266–287; it reads LENEKTQLIQQVEQLKQEVSRL. A Glycyl lysine isopeptide (Lys-Gly) (interchain with G-Cter in SUMO) cross-link involves residue K297.

It belongs to the bZIP family. Maf subfamily. In terms of assembly, homodimer or heterodimer with other bHLH-Zip transcription factors. Binds DNA as a homodimer or a heterodimer. Forms homodimers and heterodimers with FOS, FOSB and FOSL2, but not with JUN proteins (JUN, JUNB and JUND). Interacts with PAX6; the interaction is direct. Interacts with ETS1 and LRP1. Interacts with the intracellular cytoplasmic domain of LRP1 (LRPICD); the interaction results in a moderate reduction of MAFB transcriptional potential. In terms of processing, sumoylated. Sumoylation on Lys-32 and Lys-297 stimulates its transcriptional repression activity and promotes macrophage differentiation from myeloid progenitors.

It is found in the nucleus. In terms of biological role, acts as a transcriptional activator or repressor. Plays a pivotal role in regulating lineage-specific hematopoiesis by repressing ETS1-mediated transcription of erythroid-specific genes in myeloid cells. Required for monocytic, macrophage, osteoclast, podocyte and islet beta cell differentiation. Involved in renal tubule survival and F4/80 maturation. Activates the insulin and glucagon promoters. Together with PAX6, transactivates weakly the glucagon gene promoter through the G1 element. SUMO modification controls its transcriptional activity and ability to specify macrophage fate. Binds element G1 on the glucagon promoter. Involved either as an oncogene or as a tumor suppressor, depending on the cell context. Required for the transcriptional activation of HOXB3 in the rhombomere r5 in the hindbrain. In Macaca fascicularis (Crab-eating macaque), this protein is Transcription factor MafB (MAFB).